The following is a 148-amino-acid chain: Extracellular globin-2B (148 aa).

Residues 3–148 (CCSAADRHEV…IADVIKAELP (146 aa)) form the Globin domain. Cys-4 and Cys-135 are oxidised to a cystine. His-98 contacts heme b.

This sequence belongs to the globin family. In terms of assembly, disulfide bonded trimer of chains IIA, IIB, and IIC.

It localises to the secreted. The chain is Extracellular globin-2B from Tylorrhynchus heterochetus (Japanese palolo worm).